Consider the following 88-residue polypeptide: Alpha-latrotoxin-associated low molecular weight protein-2 (88 aa).

Positions 1–19 (MLKLICIAFLVTVLTLVAG) are cleaved as a signal peptide. Position 20 is a pyrrolidone carboxylic acid (Gln20). 3 disulfide bridges follow: Cys30–Cys66, Cys46–Cys62, and Cys49–Cys75.

Belongs to the arthropod CHH/MIH/GIH/VIH hormone family. The N-terminus is blocked. Expressed by the venom gland.

It is found in the secreted. Functionally, may increase the toxicity of alpha-latrotoxin and/or other venom components. Is non-toxic to mice and to the cockroach Periplaneta americana. This chain is Alpha-latrotoxin-associated low molecular weight protein-2, found in Latrodectus tredecimguttatus (Mediterranean black widow spider).